Consider the following 248-residue polypeptide: Pyridoxine 5'-phosphate synthase (248 aa).

Asn10 contributes to the 3-amino-2-oxopropyl phosphate binding site. 12 to 13 (DH) is a 1-deoxy-D-xylulose 5-phosphate binding site. 3-amino-2-oxopropyl phosphate is bound at residue Arg21. His46 functions as the Proton acceptor in the catalytic mechanism. 1-deoxy-D-xylulose 5-phosphate is bound by residues Arg48 and His53. Glu73 acts as the Proton acceptor in catalysis. Thr103 is a 1-deoxy-D-xylulose 5-phosphate binding site. Residue His194 is the Proton donor of the active site. 3-amino-2-oxopropyl phosphate is bound by residues Gly195 and 216–217 (GH).

The protein belongs to the PNP synthase family. Homooctamer; tetramer of dimers.

The protein resides in the cytoplasm. The catalysed reaction is 3-amino-2-oxopropyl phosphate + 1-deoxy-D-xylulose 5-phosphate = pyridoxine 5'-phosphate + phosphate + 2 H2O + H(+). It participates in cofactor biosynthesis; pyridoxine 5'-phosphate biosynthesis; pyridoxine 5'-phosphate from D-erythrose 4-phosphate: step 5/5. Catalyzes the complicated ring closure reaction between the two acyclic compounds 1-deoxy-D-xylulose-5-phosphate (DXP) and 3-amino-2-oxopropyl phosphate (1-amino-acetone-3-phosphate or AAP) to form pyridoxine 5'-phosphate (PNP) and inorganic phosphate. This chain is Pyridoxine 5'-phosphate synthase, found in Legionella pneumophila (strain Lens).